We begin with the raw amino-acid sequence, 428 residues long: uncharacterized protein (428 aa).

Positions 72–91 are disordered; sequence SQGSPVAPSPNHRSTMYSSS. S127 is modified (phosphoserine).

This is an uncharacterized protein from Saccharomyces cerevisiae (strain ATCC 204508 / S288c) (Baker's yeast).